The following is a 424-amino-acid chain: Light-independent protochlorophyllide reductase subunit N (424 aa).

The [4Fe-4S] cluster site is built by C26, C51, and C112.

The protein belongs to the BchN/ChlN family. Protochlorophyllide reductase is composed of three subunits; BchL, BchN and BchB. Forms a heterotetramer of two BchB and two BchN subunits. [4Fe-4S] cluster is required as a cofactor.

The enzyme catalyses chlorophyllide a + oxidized 2[4Fe-4S]-[ferredoxin] + 2 ADP + 2 phosphate = protochlorophyllide a + reduced 2[4Fe-4S]-[ferredoxin] + 2 ATP + 2 H2O. It participates in porphyrin-containing compound metabolism; bacteriochlorophyll biosynthesis (light-independent). Component of the dark-operative protochlorophyllide reductase (DPOR) that uses Mg-ATP and reduced ferredoxin to reduce ring D of protochlorophyllide (Pchlide) to form chlorophyllide a (Chlide). This reaction is light-independent. The NB-protein (BchN-BchB) is the catalytic component of the complex. The polypeptide is Light-independent protochlorophyllide reductase subunit N (Rhodobacter capsulatus (strain ATCC BAA-309 / NBRC 16581 / SB1003)).